The chain runs to 302 residues: Nucleotide-binding protein SE_0548 (302 aa).

Residue Gly18–Ser25 participates in ATP binding. Asp69–Gly72 is a GTP binding site.

The protein belongs to the RapZ-like family.

Functionally, displays ATPase and GTPase activities. The sequence is that of Nucleotide-binding protein SE_0548 from Staphylococcus epidermidis (strain ATCC 12228 / FDA PCI 1200).